The chain runs to 203 residues: tRNA (pseudouridine(54)-N(1))-methyltransferase (203 aa).

Residues L125, G146, and C179 each contribute to the S-adenosyl-L-methionine site.

The protein belongs to the methyltransferase superfamily. TrmY family. Homodimer.

The protein localises to the cytoplasm. It carries out the reaction pseudouridine(54) in tRNA + S-adenosyl-L-methionine = N(1)-methylpseudouridine(54) in tRNA + S-adenosyl-L-homocysteine + H(+). Specifically catalyzes the N1-methylation of pseudouridine at position 54 (Psi54) in tRNAs. This chain is tRNA (pseudouridine(54)-N(1))-methyltransferase, found in Methanopyrus kandleri (strain AV19 / DSM 6324 / JCM 9639 / NBRC 100938).